Reading from the N-terminus, the 437-residue chain is Glutamate-1-semialdehyde 2,1-aminomutase (437 aa).

An N6-(pyridoxal phosphate)lysine modification is found at Lys-273.

Belongs to the class-III pyridoxal-phosphate-dependent aminotransferase family. HemL subfamily. In terms of assembly, homodimer. It depends on pyridoxal 5'-phosphate as a cofactor.

It is found in the cytoplasm. The enzyme catalyses (S)-4-amino-5-oxopentanoate = 5-aminolevulinate. It functions in the pathway porphyrin-containing compound metabolism; protoporphyrin-IX biosynthesis; 5-aminolevulinate from L-glutamyl-tRNA(Glu): step 2/2. This is Glutamate-1-semialdehyde 2,1-aminomutase from Chlamydia caviae (strain ATCC VR-813 / DSM 19441 / 03DC25 / GPIC) (Chlamydophila caviae).